We begin with the raw amino-acid sequence, 542 residues long: CTP synthase (542 aa).

The segment at 1 to 265 (MPRYIFITGG…DTEILRCFGI (265 aa)) is amidoligase domain. S13 is a CTP binding site. S13 serves as a coordination point for UTP. An ATP-binding site is contributed by 14 to 19 (SLGKGL). Y54 is an L-glutamine binding site. An ATP-binding site is contributed by D71. Positions 71 and 139 each coordinate Mg(2+). Residues 146-148 (DIE), 186-191 (KTKPTQ), and K222 contribute to the CTP site. Residues 186-191 (KTKPTQ) and K222 each bind UTP. 238 to 240 (RDA) contacts ATP. A Glutamine amidotransferase type-1 domain is found at 298 to 541 (YVGLLDAYKS…IAAALHQSRM (244 aa)). Residue G353 participates in L-glutamine binding. The active-site Nucleophile; for glutamine hydrolysis is C380. Residues 381 to 384 (YGMQ), E404, and R469 each bind L-glutamine. Active-site residues include H514 and E516.

The protein belongs to the CTP synthase family. In terms of assembly, homotetramer.

It carries out the reaction UTP + L-glutamine + ATP + H2O = CTP + L-glutamate + ADP + phosphate + 2 H(+). The enzyme catalyses L-glutamine + H2O = L-glutamate + NH4(+). The catalysed reaction is UTP + NH4(+) + ATP = CTP + ADP + phosphate + 2 H(+). Its pathway is pyrimidine metabolism; CTP biosynthesis via de novo pathway; CTP from UDP: step 2/2. Allosterically activated by GTP, when glutamine is the substrate; GTP has no effect on the reaction when ammonia is the substrate. The allosteric effector GTP functions by stabilizing the protein conformation that binds the tetrahedral intermediate(s) formed during glutamine hydrolysis. Inhibited by the product CTP, via allosteric rather than competitive inhibition. Its function is as follows. Catalyzes the ATP-dependent amination of UTP to CTP with either L-glutamine or ammonia as the source of nitrogen. Regulates intracellular CTP levels through interactions with the four ribonucleotide triphosphates. This Maricaulis maris (strain MCS10) (Caulobacter maris) protein is CTP synthase.